An 807-amino-acid polypeptide reads, in one-letter code: Probable phosphoketolase (807 aa).

Belongs to the XFP family. Thiamine diphosphate is required as a cofactor.

The chain is Probable phosphoketolase from Nitrosospira multiformis (strain ATCC 25196 / NCIMB 11849 / C 71).